The sequence spans 316 residues: Small neutral protease regulatory protein (316 aa).

In terms of domain architecture, HTH lysR-type spans 1–56; sequence MRHLRALCAIADTGSVRRAARELGVSQPALTTQLRRIEQSLGAELFHRGRDGCRPT. Residues 16–35 constitute a DNA-binding region (H-T-H motif); sequence VRRAARELGVSQPALTTQLR.

This sequence belongs to the LysR transcriptional regulatory family.

Transcriptional trans-activator of the gene (mprA) for the small neutral protease. In Streptomyces coelicolor, this protein is Small neutral protease regulatory protein (mprR).